We begin with the raw amino-acid sequence, 307 residues long: MAKKKIAISCGDIQGVGLELILKSHKEVSALCEPLYLTDGELLERANQLLHNAYETKVLNALAIDAPLPLLNSSTIGKVSAQSGAYSFESFKKACELADSKEVDGICTLPINKLAWQQAQIPFVGHTDFLKQRYKDHQIIMMLGCSKLFVGLFSDHVPLGAVSQLIQVGALVKFLLAFQKSTQAKIVQVCGFNPHAGEEGLFGEEDERILKAIQKSNQTLGFECFLGPLPADSAFAPNKRKITPFYVSMSHDVGLAPLKALYFDESINVSLNAPILRTSTDHGTAFDIAYQNKANNKSYLNAIKYLA.

The substrate site is built by histidine 126 and threonine 127. A divalent metal cation contacts are provided by histidine 156, histidine 195, and histidine 251. Residues lysine 259, asparagine 268, and arginine 277 each coordinate substrate.

This sequence belongs to the PdxA family. As to quaternary structure, homodimer. The cofactor is Zn(2+). It depends on Mg(2+) as a cofactor. Co(2+) serves as cofactor.

It is found in the cytoplasm. The catalysed reaction is 4-(phosphooxy)-L-threonine + NAD(+) = 3-amino-2-oxopropyl phosphate + CO2 + NADH. The protein operates within cofactor biosynthesis; pyridoxine 5'-phosphate biosynthesis; pyridoxine 5'-phosphate from D-erythrose 4-phosphate: step 4/5. Catalyzes the NAD(P)-dependent oxidation of 4-(phosphooxy)-L-threonine (HTP) into 2-amino-3-oxo-4-(phosphooxy)butyric acid which spontaneously decarboxylates to form 3-amino-2-oxopropyl phosphate (AHAP). The polypeptide is 4-hydroxythreonine-4-phosphate dehydrogenase (Helicobacter pylori (strain ATCC 700392 / 26695) (Campylobacter pylori)).